The primary structure comprises 482 residues: Bifunctional protein HldE (482 aa).

A ribokinase region spans residues 1–322 (MFGLESKSPK…QYIHTQPSNL (322 aa)). 198–201 (NKKE) is an ATP binding site. Asp-267 is a catalytic residue. Positions 350–482 (FTNGCFDILH…IQRSKICKHS (133 aa)) are cytidylyltransferase.

The protein in the N-terminal section; belongs to the carbohydrate kinase PfkB family. In the C-terminal section; belongs to the cytidylyltransferase family. Homodimer.

It catalyses the reaction D-glycero-beta-D-manno-heptose 7-phosphate + ATP = D-glycero-beta-D-manno-heptose 1,7-bisphosphate + ADP + H(+). The catalysed reaction is D-glycero-beta-D-manno-heptose 1-phosphate + ATP + H(+) = ADP-D-glycero-beta-D-manno-heptose + diphosphate. The protein operates within nucleotide-sugar biosynthesis; ADP-L-glycero-beta-D-manno-heptose biosynthesis; ADP-L-glycero-beta-D-manno-heptose from D-glycero-beta-D-manno-heptose 7-phosphate: step 1/4. Its pathway is nucleotide-sugar biosynthesis; ADP-L-glycero-beta-D-manno-heptose biosynthesis; ADP-L-glycero-beta-D-manno-heptose from D-glycero-beta-D-manno-heptose 7-phosphate: step 3/4. It participates in bacterial outer membrane biogenesis; LPS core biosynthesis. Its function is as follows. Catalyzes the phosphorylation of D-glycero-D-manno-heptose 7-phosphate at the C-1 position to selectively form D-glycero-beta-D-manno-heptose-1,7-bisphosphate. In terms of biological role, catalyzes the ADP transfer from ATP to D-glycero-beta-D-manno-heptose 1-phosphate, yielding ADP-D-glycero-beta-D-manno-heptose. The polypeptide is Bifunctional protein HldE (Helicobacter hepaticus (strain ATCC 51449 / 3B1)).